Consider the following 281-residue polypeptide: Histidine biosynthesis bifunctional protein hisIE, chloroplastic (281 aa).

Residues 1 to 50 (MAVSYNALAQSLARSSCFIPKPYSFRDTKLRSRSNVVFACNDNKNIALQA) constitute a chloroplast transit peptide. Positions 51-178 (KVDNLLDRIK…NKLALTTLYS (128 aa)) are phosphoribosyl-AMP cyclohydrolase. Positions 179–281 (LESIISKRKE…GIEEKQNRTK (103 aa)) are phosphoribosyl-ATP pyrophosphohydrolase.

The protein in the N-terminal section; belongs to the PRA-CH family. It in the C-terminal section; belongs to the PRA-PH family. In terms of tissue distribution, ubiquitously expressed throughout development.

Its subcellular location is the plastid. The protein localises to the chloroplast. It carries out the reaction 1-(5-phospho-beta-D-ribosyl)-ATP + H2O = 1-(5-phospho-beta-D-ribosyl)-5'-AMP + diphosphate + H(+). The enzyme catalyses 1-(5-phospho-beta-D-ribosyl)-5'-AMP + H2O = 1-(5-phospho-beta-D-ribosyl)-5-[(5-phospho-beta-D-ribosylamino)methylideneamino]imidazole-4-carboxamide. The protein operates within amino-acid biosynthesis; L-histidine biosynthesis; L-histidine from 5-phospho-alpha-D-ribose 1-diphosphate: step 2/9. It functions in the pathway amino-acid biosynthesis; L-histidine biosynthesis; L-histidine from 5-phospho-alpha-D-ribose 1-diphosphate: step 3/9. This is Histidine biosynthesis bifunctional protein hisIE, chloroplastic (HISN2) from Arabidopsis thaliana (Mouse-ear cress).